We begin with the raw amino-acid sequence, 65 residues long: DNA-directed RNA polymerase subunit Rpo10 (65 aa).

Positions 7, 10, 44, and 45 each coordinate Zn(2+).

The protein belongs to the archaeal Rpo10/eukaryotic RPB10 RNA polymerase subunit family. Part of the RNA polymerase complex. Zn(2+) is required as a cofactor.

It localises to the cytoplasm. It catalyses the reaction RNA(n) + a ribonucleoside 5'-triphosphate = RNA(n+1) + diphosphate. Its function is as follows. DNA-dependent RNA polymerase (RNAP) catalyzes the transcription of DNA into RNA using the four ribonucleoside triphosphates as substrates. The protein is DNA-directed RNA polymerase subunit Rpo10 of Pyrococcus furiosus (strain ATCC 43587 / DSM 3638 / JCM 8422 / Vc1).